A 439-amino-acid polypeptide reads, in one-letter code: Serine--tRNA ligase (439 aa).

247–249 provides a ligand contact to L-serine; that stretch reads TSE. An ATP-binding site is contributed by 278 to 280; the sequence is RSE. Glutamate 301 contributes to the L-serine binding site. 365 to 368 contributes to the ATP binding site; it reads EISS. Serine 400 lines the L-serine pocket.

The protein belongs to the class-II aminoacyl-tRNA synthetase family. Type-1 seryl-tRNA synthetase subfamily. In terms of assembly, homodimer. The tRNA molecule binds across the dimer.

The protein localises to the cytoplasm. It carries out the reaction tRNA(Ser) + L-serine + ATP = L-seryl-tRNA(Ser) + AMP + diphosphate + H(+). The enzyme catalyses tRNA(Sec) + L-serine + ATP = L-seryl-tRNA(Sec) + AMP + diphosphate + H(+). The protein operates within aminoacyl-tRNA biosynthesis; selenocysteinyl-tRNA(Sec) biosynthesis; L-seryl-tRNA(Sec) from L-serine and tRNA(Sec): step 1/1. Functionally, catalyzes the attachment of serine to tRNA(Ser). Is also able to aminoacylate tRNA(Sec) with serine, to form the misacylated tRNA L-seryl-tRNA(Sec), which will be further converted into selenocysteinyl-tRNA(Sec). In Paracidovorax citrulli (strain AAC00-1) (Acidovorax citrulli), this protein is Serine--tRNA ligase.